The primary structure comprises 318 residues: Replication factor C small subunit (318 aa).

43-50 (GPAGTGKT) is an ATP binding site.

Belongs to the activator 1 small subunits family. RfcS subfamily. Heteromultimer composed of small subunits (RfcS) and large subunits (RfcL).

Functionally, part of the RFC clamp loader complex which loads the PCNA sliding clamp onto DNA. This is Replication factor C small subunit from Picrophilus torridus (strain ATCC 700027 / DSM 9790 / JCM 10055 / NBRC 100828 / KAW 2/3).